The chain runs to 511 residues: Maturase K (511 aa).

This sequence belongs to the intron maturase 2 family. MatK subfamily.

The protein resides in the plastid. It localises to the chloroplast. Functionally, usually encoded in the trnK tRNA gene intron. Probably assists in splicing its own and other chloroplast group II introns. This is Maturase K from Primula veris (Cowslip).